We begin with the raw amino-acid sequence, 100 residues long: U-myrmeciitoxin(01)-Mg7c (100 aa).

The N-terminal stretch at 1-17 (MKLSYLSLALAIILVLA) is a signal peptide. A propeptide spanning residues 18 to 50 (IVYSPHMEVKALADAEPDAIGFADAFGEADAEP) is cleaved from the precursor. A glycan (O-linked (GalNAc...) serine) is linked at serine 85. O-linked (GalNAc...) threonine glycosylation is found at threonine 94 and threonine 95.

This sequence belongs to the formicidae venom precursor-01 superfamily. Post-translationally, glycosylation is critical to maintaining the aqueous solubility of this protein, but does not directly contribute to its activity. Expressed by the venom gland.

The protein resides in the secreted. It localises to the target cell membrane. Functionally, neurotoxin that triggers pain behavior and inflammation in mammals, and is paralytic and lethal to insects. Causes a time-dependent increase in cell leak current. May act by targeting membranes. The protein is U-myrmeciitoxin(01)-Mg7c of Myrmecia gulosa (Red bulldog ant).